A 388-amino-acid polypeptide reads, in one-letter code: Chaperone protein DnaJ (388 aa).

One can recognise a J domain in the interval 5 to 69 (DYYDVLGVDK…QKKAQYDQFG (65 aa)). The CR-type zinc-finger motif lies at 145 to 227 (GKKTDITYTR…CHGKGTIDKK (83 aa)). C158, C161, C175, C178, C201, C204, C215, and C218 together coordinate Zn(2+). CXXCXGXG motif repeat units lie at residues 158–165 (CPTCDGSG), 175–182 (CDKCHGTG), 201–208 (CDKCGGRG), and 215–222 (CQTCHGKG).

Belongs to the DnaJ family. As to quaternary structure, homodimer. Zn(2+) serves as cofactor.

The protein resides in the cytoplasm. Its function is as follows. Participates actively in the response to hyperosmotic and heat shock by preventing the aggregation of stress-denatured proteins and by disaggregating proteins, also in an autonomous, DnaK-independent fashion. Unfolded proteins bind initially to DnaJ; upon interaction with the DnaJ-bound protein, DnaK hydrolyzes its bound ATP, resulting in the formation of a stable complex. GrpE releases ADP from DnaK; ATP binding to DnaK triggers the release of the substrate protein, thus completing the reaction cycle. Several rounds of ATP-dependent interactions between DnaJ, DnaK and GrpE are required for fully efficient folding. Also involved, together with DnaK and GrpE, in the DNA replication of plasmids through activation of initiation proteins. The chain is Chaperone protein DnaJ from Lactobacillus gasseri (strain ATCC 33323 / DSM 20243 / BCRC 14619 / CIP 102991 / JCM 1131 / KCTC 3163 / NCIMB 11718 / NCTC 13722 / AM63).